The primary structure comprises 224 residues: Large ribosomal subunit protein uL4 (224 aa).

The tract at residues 52 to 109 (AAARQGTHSTKTRGDVSGGGRKPYRQKGTGRARQGSTRTPQFTGGGVVHGPKPRDYSQ) is disordered.

It belongs to the universal ribosomal protein uL4 family. Part of the 50S ribosomal subunit.

One of the primary rRNA binding proteins, this protein initially binds near the 5'-end of the 23S rRNA. It is important during the early stages of 50S assembly. It makes multiple contacts with different domains of the 23S rRNA in the assembled 50S subunit and ribosome. Its function is as follows. Forms part of the polypeptide exit tunnel. The protein is Large ribosomal subunit protein uL4 of Mycobacterium ulcerans (strain Agy99).